The primary structure comprises 85 residues: ATP synthase subunit c (85 aa).

Transmembrane regions (helical) follow at residues 10–30 and 53–73; these read IAVG…FALL and FIIA…ALLF.

It belongs to the ATPase C chain family. As to quaternary structure, F-type ATPases have 2 components, F(1) - the catalytic core - and F(0) - the membrane proton channel. F(1) has five subunits: alpha(3), beta(3), gamma(1), delta(1), epsilon(1). F(0) has three main subunits: a(1), b(2) and c(10-14). The alpha and beta chains form an alternating ring which encloses part of the gamma chain. F(1) is attached to F(0) by a central stalk formed by the gamma and epsilon chains, while a peripheral stalk is formed by the delta and b chains.

Its subcellular location is the cell inner membrane. In terms of biological role, f(1)F(0) ATP synthase produces ATP from ADP in the presence of a proton or sodium gradient. F-type ATPases consist of two structural domains, F(1) containing the extramembraneous catalytic core and F(0) containing the membrane proton channel, linked together by a central stalk and a peripheral stalk. During catalysis, ATP synthesis in the catalytic domain of F(1) is coupled via a rotary mechanism of the central stalk subunits to proton translocation. Key component of the F(0) channel; it plays a direct role in translocation across the membrane. A homomeric c-ring of between 10-14 subunits forms the central stalk rotor element with the F(1) delta and epsilon subunits. In Aliivibrio fischeri (strain ATCC 700601 / ES114) (Vibrio fischeri), this protein is ATP synthase subunit c.